Consider the following 98-residue polypeptide: NADH-ubiquinone oxidoreductase chain 4L (98 aa).

Transmembrane regions (helical) follow at residues 2–22, 29–49, and 61–81; these read PSISTNIVLAFITALLGMLIF, SLLCLEGMMLSMFILSTLTIL, and ILLLVFAACEAAVGLALLVTV.

The protein belongs to the complex I subunit 4L family. In terms of assembly, core subunit of respiratory chain NADH dehydrogenase (Complex I) which is composed of 45 different subunits.

It is found in the mitochondrion inner membrane. It carries out the reaction a ubiquinone + NADH + 5 H(+)(in) = a ubiquinol + NAD(+) + 4 H(+)(out). Functionally, core subunit of the mitochondrial membrane respiratory chain NADH dehydrogenase (Complex I) which catalyzes electron transfer from NADH through the respiratory chain, using ubiquinone as an electron acceptor. Part of the enzyme membrane arm which is embedded in the lipid bilayer and involved in proton translocation. In Eulemur rubriventer (Red-bellied lemur), this protein is NADH-ubiquinone oxidoreductase chain 4L (MT-ND4L).